Here is a 621-residue protein sequence, read N- to C-terminus: Chaperone protein HscA homolog (621 aa).

The protein belongs to the heat shock protein 70 family.

Chaperone involved in the maturation of iron-sulfur cluster-containing proteins. Has a low intrinsic ATPase activity which is markedly stimulated by HscB. The polypeptide is Chaperone protein HscA homolog (Cupriavidus metallidurans (strain ATCC 43123 / DSM 2839 / NBRC 102507 / CH34) (Ralstonia metallidurans)).